The sequence spans 154 residues: Myoglobin-2 (154 aa).

The Globin domain maps to G2 to K148. Nitrite is bound at residue H65. H65 is a binding site for O2. Residue H94 participates in heme b binding.

The protein belongs to the globin family. As to quaternary structure, monomeric.

The protein localises to the cytoplasm. It is found in the sarcoplasm. The enzyme catalyses Fe(III)-heme b-[protein] + nitric oxide + H2O = Fe(II)-heme b-[protein] + nitrite + 2 H(+). It catalyses the reaction H2O2 + AH2 = A + 2 H2O. In terms of biological role, monomeric heme protein which primary function is to store oxygen and facilitate its diffusion within muscle tissues. Reversibly binds oxygen through a pentacoordinated heme iron and enables its timely and efficient release as needed during periods of heightened demand. Depending on the oxidative conditions of tissues and cells, and in addition to its ability to bind oxygen, it also has a nitrite reductase activity whereby it regulates the production of bioactive nitric oxide. Under stress conditions, like hypoxia and anoxia, it also protects cells against reactive oxygen species thanks to its pseudoperoxidase activity. The protein is Myoglobin-2 (MB2) of Stenella attenuata (Pantropical spotted dolphin).